Consider the following 81-residue polypeptide: Cytochrome b559 subunit alpha (81 aa).

Residues 21–35 form a helical membrane-spanning segment; it reads VIHSITIPALFIAGW. Heme is bound at residue His-23.

Belongs to the PsbE/PsbF family. In terms of assembly, heterodimer of an alpha subunit and a beta subunit. PSII is composed of 1 copy each of membrane proteins PsbA, PsbB, PsbC, PsbD, PsbE, PsbF, PsbH, PsbI, PsbJ, PsbK, PsbL, PsbM, PsbT, PsbX, PsbY, PsbZ, Psb30/Ycf12, at least 3 peripheral proteins of the oxygen-evolving complex and a large number of cofactors. It forms dimeric complexes. Requires heme b as cofactor.

The protein localises to the plastid. The protein resides in the chloroplast thylakoid membrane. Its function is as follows. This b-type cytochrome is tightly associated with the reaction center of photosystem II (PSII). PSII is a light-driven water:plastoquinone oxidoreductase that uses light energy to abstract electrons from H(2)O, generating O(2) and a proton gradient subsequently used for ATP formation. It consists of a core antenna complex that captures photons, and an electron transfer chain that converts photonic excitation into a charge separation. The chain is Cytochrome b559 subunit alpha from Tetradesmus obliquus (Green alga).